The sequence spans 138 residues: U1 small nuclear ribonucleoprotein C (138 aa).

The segment at 4 to 36 adopts a Matrin-type zinc-finger fold; it reads FYCDYCDTYLTHDSPSVRKTHCSGRKHKENVRD. A Phosphotyrosine modification is found at Tyr8. Ser17 is subject to Phosphoserine. Position 52 is an N6-acetyllysine (Lys52). The interval 62–99 is disordered; it reads IPPNLFSAPPLGGPMIPPPHPSMMGPPPPGMMPVGPPP. The span at 72-99 shows a compositional bias: pro residues; it reads LGGPMIPPPHPSMMGPPPPGMMPVGPPP.

Belongs to the U1 small nuclear ribonucleoprotein C family. As to quaternary structure, component of the U1 snRNP. The U1 snRNP is composed of the U1 snRNA and the 7 core Sm proteins SNRPB, SNRPD1, SNRPD2, SNRPD3, SNRPE, SNRPF and SNRPG that assemble in a heptameric protein ring on the Sm site of the small nuclear RNA to form the core snRNP, and at least 3 U1 snRNP-specific proteins SNRNP70/U1-70K, SNRPA/U1-A and SNRPC/U1-C. SNRPC/U1-C interacts with U1 snRNA and the 5' splice-site region of the pre-mRNA. Interacts (via N-terminus) with TIA1 (via C-terminus); thereby promoting spliceosomal U1 snRNP recruitment to 5' splice sites.

It localises to the nucleus. Component of the spliceosomal U1 snRNP, which is essential for recognition of the pre-mRNA 5' splice-site and the subsequent assembly of the spliceosome. SNRPC/U1-C is directly involved in initial 5' splice-site recognition for both constitutive and regulated alternative splicing. The interaction with the 5' splice-site seems to precede base-pairing between the pre-mRNA and the U1 snRNA. Stimulates commitment or early (E) complex formation by stabilizing the base pairing of the 5' end of the U1 snRNA and the 5' splice-site region. The polypeptide is U1 small nuclear ribonucleoprotein C (Monodelphis domestica (Gray short-tailed opossum)).